The chain runs to 313 residues: Flagellin (313 aa).

Coiled coils occupy residues 5-33 and 97-117; these read INTN…ERLS and VQSE…KEVT. 4 tandem repeats follow at residues 179–197, 199–217, 255–259, and 262–266. The interval 179-217 is 2 X 19 AA approximate tandem repeats; sequence KEAVAAKPAVPAQPAVPADPKNGVAAKPAVPAQPEVKAQ. Positions 190 to 199 are enriched in low complexity; sequence AQPAVPADPK. Positions 190–211 are disordered; the sequence is AQPAVPADPKNGVAAKPAVPAQ. Residues 252 to 298 are a coiled coil; the sequence is ESTVNNLNNTVNNLSAARSRIEDADYAVEVSNMSRGQILQQAGTSVL. The 2 X 5 AA approximate repeats of V-N-N-L-N stretch occupies residues 255 to 266; sequence VNNLNNTVNNLS.

The protein belongs to the bacterial flagellin family.

It localises to the secreted. The protein localises to the bacterial flagellum. Its function is as follows. Flagellin is the subunit protein which polymerizes to form the filaments of bacterial flagella. This chain is Flagellin (fliC), found in Xenorhabdus nematophila (Achromobacter nematophilus).